The following is a 141-amino-acid chain: Large ribosomal subunit protein uL16 (141 aa).

A disordered region spans residues 1 to 23 (MLMPKRTKWRKQQKGRNRGKSFR).

The protein belongs to the universal ribosomal protein uL16 family. As to quaternary structure, part of the 50S ribosomal subunit.

Binds 23S rRNA and is also seen to make contacts with the A and possibly P site tRNAs. This is Large ribosomal subunit protein uL16 from Sulfurovum sp. (strain NBC37-1).